Reading from the N-terminus, the 210-residue chain is Large ribosomal subunit protein uL3 (210 aa).

Belongs to the universal ribosomal protein uL3 family. In terms of assembly, part of the 50S ribosomal subunit. Forms a cluster with proteins L14 and L19.

In terms of biological role, one of the primary rRNA binding proteins, it binds directly near the 3'-end of the 23S rRNA, where it nucleates assembly of the 50S subunit. The chain is Large ribosomal subunit protein uL3 from Natranaerobius thermophilus (strain ATCC BAA-1301 / DSM 18059 / JW/NM-WN-LF).